The primary structure comprises 32 residues: Photosystem II reaction center protein T (32 aa).

Residues 3 to 23 form a helical membrane-spanning segment; sequence TLVYTFLLIGTLAVLFAAVFF.

This sequence belongs to the PsbT family. PSII is composed of 1 copy each of membrane proteins PsbA, PsbB, PsbC, PsbD, PsbE, PsbF, PsbH, PsbI, PsbJ, PsbK, PsbL, PsbM, PsbT, PsbX, PsbY, PsbZ, Psb30/Ycf12, at least 3 peripheral proteins of the oxygen-evolving complex and a large number of cofactors. It forms dimeric complexes.

The protein localises to the plastid. The protein resides in the chloroplast thylakoid membrane. Its function is as follows. Found at the monomer-monomer interface of the photosystem II (PS II) dimer, plays a role in assembly and dimerization of PSII. PSII is a light-driven water plastoquinone oxidoreductase, using light energy to abstract electrons from H(2)O, generating a proton gradient subsequently used for ATP formation. The protein is Photosystem II reaction center protein T of Guillardia theta (Cryptophyte).